We begin with the raw amino-acid sequence, 355 residues long: Peptide chain release factor 1 (355 aa).

Position 233 is an N5-methylglutamine (Gln-233).

The protein belongs to the prokaryotic/mitochondrial release factor family. Methylated by PrmC. Methylation increases the termination efficiency of RF1.

It localises to the cytoplasm. Functionally, peptide chain release factor 1 directs the termination of translation in response to the peptide chain termination codons UAG and UAA. This Clostridium tetani (strain Massachusetts / E88) protein is Peptide chain release factor 1.